Here is a 374-residue protein sequence, read N- to C-terminus: Gibberellin 3-beta-dioxygenase 1 (374 aa).

The Fe2OG dioxygenase domain occupies 206-307; it reads KACAALQLNS…RFSVAYLYGP (102 aa). Histidine 231, aspartate 233, and histidine 288 together coordinate Fe cation. Residue arginine 298 is part of the active site. A 2-oxoglutarate-binding site is contributed by arginine 298.

The protein belongs to the iron/ascorbate-dependent oxidoreductase family. GA3OX subfamily. Requires L-ascorbate as cofactor. Fe(2+) serves as cofactor. Expressed in radicles, roots, internodes, cotyledons, leaves and shoots. Barely detected in developing seeds. Not detected in flowers or young fruits.

It carries out the reaction gibberellin A20 + 2-oxoglutarate + O2 = gibberellin A1 + succinate + CO2. It participates in plant hormone biosynthesis; gibberellin biosynthesis. Its function is as follows. Converts the inactive gibberellin (GA) precursors GA9 and GA20 in the bioactives gibberellins GA4 and GA1. Has a small activity on GA29, producing GA8. Unable to convert GA20 to GA5, GA5 to GA3 or GA12 to GA14. Involved in the production of bioactive GA for vegetative growth and development, but not for the 3-beta-hydroxylation of GA in developing seeds. In Pisum sativum (Garden pea), this protein is Gibberellin 3-beta-dioxygenase 1 (LE).